Here is an 856-residue protein sequence, read N- to C-terminus: Inactive rhomboid protein 2 (856 aa).

Residues Met1–Ser115 are disordered. Residues Met1–Thr409 lie on the Cytoplasmic side of the membrane. Position 90 is a phosphoserine (Ser90). Residues Pro94–Pro106 are compositionally biased toward basic and acidic residues. Phosphoserine occurs at positions 113 and 117. Residues Pro165–Pro184 form a disordered region. Residues Ala191 to Ser271 are involved in interaction with FRMD8. Ser323, Ser325, and Ser328 each carry phosphoserine. A helical transmembrane segment spans residues Phe410–Phe430. Topologically, residues Ala431 to Ser660 are lumenal. The interval Gly531–Pro553 is disordered. Residues Leu661–Leu681 traverse the membrane as a helical segment. Over Arg682 to Arg692 the chain is Cytoplasmic. Residues Ile693 to Pro713 form a helical membrane-spanning segment. The Lumenal segment spans residues Tyr714–Arg715. Residues Ala716–Phe736 form a helical membrane-spanning segment. Residues Gln737–Lys747 lie on the Cytoplasmic side of the membrane. The chain crosses the membrane as a helical span at residues Ala748–Ile768. The Lumenal portion of the chain corresponds to Asp769 to His773. The chain crosses the membrane as a helical span at residues Ile774–Gly794. The Cytoplasmic segment spans residues Thr795–Arg802. The helical transmembrane segment at Ala803 to Leu823 threads the bilayer. Topologically, residues Tyr824 to His856 are lumenal.

The protein belongs to the peptidase S54 family. As to quaternary structure, interacts with EGF. Interacts (via cytoplasmic N-terminus) with FRMD8/iTAP; this interaction leads to mutual protein stabilization. Interacts with ADAM17/TACE. In terms of tissue distribution, found in the epidermis and esophageal epithelium.

The protein resides in the endoplasmic reticulum membrane. Its subcellular location is the cell membrane. Its function is as follows. Regulates ADAM17 protease, a sheddase of the epidermal growth factor (EGF) receptor ligands and TNF, thereby plays a role in sleep, cell survival, proliferation, migration and inflammation. Does not exhibit any protease activity on its own. The polypeptide is Inactive rhomboid protein 2 (RHBDF2) (Homo sapiens (Human)).